A 751-amino-acid chain; its full sequence is Serine/threonine-protein kinase B-raf (751 aa).

Residues 1 to 32 show a composition bias toward gly residues; that stretch reads MAALSGGGGSSSGGGGGGGGGGGGGDGGGGAE. Residues 1–55 form a disordered region; sequence MAALSGGGGSSSGGGGGGGGGGGGGDGGGGAEQGQALFNGDMEPEAGAGAAASSA. An N-acetylalanine modification is found at Ala-2. The span at 46-55 shows a compositional bias: low complexity; sequence AGAGAAASSA. Ser-135 carries the post-translational modification Phosphoserine. Residues 139–211 enclose the RBD domain; the sequence is PIVRVFLPNK…TGEELHVEVL (73 aa). 8 residues coordinate Zn(2+): His-219, Cys-232, Cys-235, Cys-245, Cys-248, His-253, Cys-256, and Cys-264. The tract at residues 288-440 is disordered; the sequence is EASFPETALP…SSDDWEIPDG (153 aa). Low complexity predominate over residues 297-324; it reads PSGSSSAPPSDSTGPQILTSPSPSKSIP. Ser-316 bears the Phosphoserine mark. Positions 331–346 are enriched in basic and acidic residues; it reads PADEDHRNQFGQRDRS. Residue Ser-348 is modified to Phosphoserine. Residue Thr-356 is modified to Phosphothreonine; by autocatalysis. Thr-379 bears the Phosphothreonine mark. At Ser-382 the chain carries Phosphoserine. Residue Thr-384 is modified to Phosphothreonine. Residues 406–432 are compositionally biased toward basic and acidic residues; the sequence is QRERKSSSSSSSEDRSRMKTLGRRDSS. A phosphoserine mark is found at Ser-431 and Ser-432. A Protein kinase domain is found at 442 to 702; that stretch reads ITVGQRIGSG…PQILASIELL (261 aa). ATP is bound by residues 448-456 and Lys-468; that span reads IGSGSFGTV. Residue Asp-561 is the Proton acceptor of the active site. Lys-563 is covalently cross-linked (Glycyl lysine isopeptide (Lys-Gly) (interchain with G-Cter in ubiquitin)). Arg-656 bears the Omega-N-methylarginine; by PRMT5 mark. A phosphoserine mark is found at Ser-714 and Ser-735. Phosphothreonine; by MAPK1 is present on Thr-738.

It belongs to the protein kinase superfamily. TKL Ser/Thr protein kinase family. RAF subfamily. Monomer. Homodimer. Heterodimerizes with RAF1, and the heterodimer possesses a highly increased kinase activity compared to the respective homodimers or monomers. Heterodimerization is mitogen-regulated and enhanced by 14-3-3 proteins. MAPK1/ERK2 activation can induce a negative feedback that promotes the dissociation of the heterodimer by phosphorylating BRAF at Thr-738. Heterodimerizes (via N-terminus) with KSR1 (via N-terminus) or KSR2 (via N-terminus) in a MAP2K1-dependent manner. Interacts with MAP2K1 and MAP2K2. Found in a complex with at least BRAF, HRAS, MAP2K1, MAPK3 and RGS14. Interacts with RIT1. Interacts (via N-terminus) with RGS14 (via RBD domains); the interaction mediates the formation of a ternary complex with RAF1, a ternary complex inhibited by GNAI1. Interacts with DGKH. Interacts with PRMT5. Interacts with AKAP13, MAP2K1 and KSR1. Identified in a complex with AKAP13, KSR1 and MAP2K1. Interacts with FNIP1 and FNIP2. The cofactor is Zn(2+). Phosphorylation at Ser-348 by SGK1 inhibits its activity. Dephosphorylation of Ser-348 by the SHOC2-MRAS-PP1c (SMP) complex consisting of SHOC2, GTP-bound M-Ras/MRAS and the catalytic subunit of protein phosphatase 1 (PPP1CA, PPP1CB or PPP1CC); this relieves inactivation and stimulates kinase activity. Post-translationally, methylation by PRMT5 decreases stability and kinase activity. In terms of processing, ubiquitinated by RNF149; which leads to proteasomal degradation. Polyubiquitinated at Lys-615 in response to EGF.

It localises to the nucleus. Its subcellular location is the cytoplasm. The protein localises to the cell membrane. It carries out the reaction L-seryl-[protein] + ATP = O-phospho-L-seryl-[protein] + ADP + H(+). It catalyses the reaction L-threonyl-[protein] + ATP = O-phospho-L-threonyl-[protein] + ADP + H(+). With respect to regulation, in quiescent cells, maintained in an inactive state via an intramolecular interaction between the protein kinase and N-terminal domains. Following mitogen-mediated cell activation, binds via its RGB domain to active HRAS (GTP-bound) which releases the inhibitory intramolecular interaction between the two domains. This allows the MAP2K1-mediated dimerization of KSR1 or KSR2, and BRAF which activates BRAF. In terms of biological role, involved in the transduction of mitogenic signals from the cell membrane to the nucleus. Phosphorylates MAP2K1, and thereby activates the MAP kinase signal transduction pathway. Phosphorylates PFKFB2. May play a role in the postsynaptic responses of hippocampal neurons. The chain is Serine/threonine-protein kinase B-raf from Mus musculus (Mouse).